The chain runs to 385 residues: Putative ribosomal RNA large subunit methyltransferase MJ1653 (385 aa).

A PUA domain is found at 2–81 (TTKLYVDFGG…LDENYIREKI (80 aa)).

It belongs to the methyltransferase superfamily. RlmI family.

It is found in the cytoplasm. This is Putative ribosomal RNA large subunit methyltransferase MJ1653 from Methanocaldococcus jannaschii (strain ATCC 43067 / DSM 2661 / JAL-1 / JCM 10045 / NBRC 100440) (Methanococcus jannaschii).